The chain runs to 730 residues: Protein folded gastrulation (730 aa).

A signal peptide spans 1-21 (MSPPNCLLAVLALTVFIGANN). N-linked (GlcNAc...) asparagine glycans are attached at residues N51 and N193. A compositionally biased stretch (low complexity) spans 197-211 (TPETSTSITPTSTTT). The interval 197–222 (TPETSTSITPTSTTTFAVPSVPSGEA) is disordered. 2 N-linked (GlcNAc...) asparagine glycosylation sites follow: N252 and N289. A compositionally biased stretch (acidic residues) spans 361-385 (ELEEEVGEEEVTATDILPSEEDEYT). Residues 361 to 424 (ELEEEVGEEE…SPHPPEEPEI (64 aa)) form a disordered region. Residues 386 to 415 (TETATTTGDTTVAEASMDTSTATSTSGQSS) show a composition bias toward low complexity. Residue N459 is glycosylated (N-linked (GlcNAc...) asparagine). Disordered regions lie at residues 474–526 (EDES…GGHK) and 545–583 (KGKQRQQHQPQKQQLEPTSTEITSALTSTSTEDATTTTT). Residues 478 to 491 (STTTATPEPSSSTP) are compositionally biased toward low complexity. Residues 504 to 513 (DNDNLMTNTI) show a composition bias toward polar residues. Residues 567-583 (TSALTSTSTEDATTTTT) show a composition bias toward low complexity. N-linked (GlcNAc...) asparagine glycans are attached at residues N590 and N639. A compositionally biased stretch (low complexity) spans 663–676 (SAASTESAGTAATT). The tract at residues 663 to 683 (SAASTESAGTAATTPNSSSNP) is disordered. N-linked (GlcNAc...) asparagine glycosylation is present at N678.

Post-translationally, may be highly O-glycosylated in its Ser/Thr-rich C-terminal part. In terms of tissue distribution, expressed in the invagination primordia in a pattern that precisely precedes the pattern of constrictions.

It localises to the secreted. The protein resides in the extracellular space. The protein localises to the extracellular matrix. In terms of biological role, coordinates cell shape changes during formation of the ventral furrow and invagination of the posterior midgut primordium, by inducing apical constriction of cells in spatially and temporally defined manners. Could function as a secreted signal to initiate apical constriction by acting as a ligand for an unidentified G protein-coupled receptor, which in turn activates the G protein alpha subunit encoded by concertina, in neighboring cells. Such an intracellular pathway would ultimately induce contraction of the apical actin-myosin network. In the ventral furrow, fog appears to ensure that all the cells initiate constriction within several minutes of each other. In the posterior midgut invagination, fog appears to direct the ordered progression of constriction initiations out from a central region and also to delimit the peripheral extent of this spreading. This Drosophila melanogaster (Fruit fly) protein is Protein folded gastrulation (fog).